We begin with the raw amino-acid sequence, 1185 residues long: 1-phosphatidylinositol 4,5-bisphosphate phosphodiesterase beta-2 (1185 aa).

Positions 312-463 constitute a PI-PLC X-box domain; it reads HDMTQPLNHY…LRGKILIKNK (152 aa). H327 is a catalytic residue. Ca(2+) contacts are provided by N328, E357, and D359. H374 is a catalytic residue. E408 is a binding site for Ca(2+). A disordered region spans residues 460-533; it reads IKNKKNQFSG…EEIKKMQSDE (74 aa). The span at 465-476 shows a compositional bias: polar residues; sequence NQFSGPTSSSKD. Over residues 501 to 524 the composition is skewed to acidic residues; the sequence is EGTELEEEEVEEEEEEESGNLDEE. The region spanning 546 to 662 is the PI-PLC Y-box domain; that stretch reads MSSLVNYIQP…GYLLKHEFMR (117 aa). The 129-residue stretch at 662–790 folds into the C2 domain; it reads RRPDKQFNPF…CLHSESNMPL (129 aa). Disordered stretches follow at residues 859–888 and 943–979; these read LAPT…RTAS and GACK…VDGR. Positions 872-888 are enriched in basic and acidic residues; it reads GAREEAMKEAAEPRTAS. Phosphoserine is present on S953. Positions 988 to 1147 form a coiled coil; that stretch reads ELELLRQGEE…VKESVRACLR (160 aa).

In terms of assembly, interacts with RAC1. Forms a complex composed of at least WDR26, a G-beta:gamma unit, and PLCB2. The cofactor is Ca(2+).

It carries out the reaction a 1,2-diacyl-sn-glycero-3-phospho-(1D-myo-inositol-4,5-bisphosphate) + H2O = 1D-myo-inositol 1,4,5-trisphosphate + a 1,2-diacyl-sn-glycerol + H(+). It catalyses the reaction a 1,2-diacyl-sn-glycero-3-phospho-(1D-myo-inositol) + H2O = 1D-myo-inositol 1-phosphate + a 1,2-diacyl-sn-glycerol + H(+). Functionally, the production of the second messenger molecules diacylglycerol (DAG) and inositol 1,4,5-trisphosphate (IP3) is mediated by activated phosphatidylinositol-specific phospholipase C enzymes. In neutrophils, participates in a phospholipase C-activating N-formyl peptide-activated GPCR (G protein-coupled receptor) signaling pathway by promoting RASGRP4 activation by DAG, to promote neutrophil functional responses. The protein is 1-phosphatidylinositol 4,5-bisphosphate phosphodiesterase beta-2 of Homo sapiens (Human).